Here is a 479-residue protein sequence, read N- to C-terminus: Adenosylhomocysteinase (479 aa).

The substrate site is built by Thr-65, Asp-145, and Glu-205. 206-208 (TTT) serves as a coordination point for NAD(+). Residues Lys-235 and Asp-239 each coordinate substrate. NAD(+) contacts are provided by residues Asn-240, 269-274 (GYGDVG), Glu-292, Asn-327, 348-350 (IGH), and Asn-393.

The protein belongs to the adenosylhomocysteinase family. NAD(+) serves as cofactor.

The protein resides in the cytoplasm. It catalyses the reaction S-adenosyl-L-homocysteine + H2O = L-homocysteine + adenosine. Its pathway is amino-acid biosynthesis; L-homocysteine biosynthesis; L-homocysteine from S-adenosyl-L-homocysteine: step 1/1. Its function is as follows. May play a key role in the regulation of the intracellular concentration of adenosylhomocysteine. The sequence is that of Adenosylhomocysteinase from Herminiimonas arsenicoxydans.